Here is a 416-residue protein sequence, read N- to C-terminus: Bifunctional protein GlmU (416 aa).

The tract at residues 1–229 is pyrophosphorylase; it reads MTNYAIILAA…FNESLGVNDR (229 aa). Residues 8–11, K22, Q72, and 77–78 contribute to the UDP-N-acetyl-alpha-D-glucosamine site; these read LAAG and GT. Residue D102 coordinates Mg(2+). Positions 139, 154, 169, and 227 each coordinate UDP-N-acetyl-alpha-D-glucosamine. N227 contacts Mg(2+). The tract at residues 230–250 is linker; the sequence is VALATAETVMRQRITQKHMVN. The tract at residues 251–416 is N-acetyltransferase; it reads GVTFQNPETV…DSHCTFGSWR (166 aa). R332 and K350 together coordinate UDP-N-acetyl-alpha-D-glucosamine. Catalysis depends on H362, which acts as the Proton acceptor. The UDP-N-acetyl-alpha-D-glucosamine site is built by Y365 and N376. Residues A379 and 385–386 contribute to the acetyl-CoA site; that span reads NY.

It in the N-terminal section; belongs to the N-acetylglucosamine-1-phosphate uridyltransferase family. The protein in the C-terminal section; belongs to the transferase hexapeptide repeat family. In terms of assembly, homotrimer. The cofactor is Mg(2+).

The protein resides in the cytoplasm. The enzyme catalyses alpha-D-glucosamine 1-phosphate + acetyl-CoA = N-acetyl-alpha-D-glucosamine 1-phosphate + CoA + H(+). The catalysed reaction is N-acetyl-alpha-D-glucosamine 1-phosphate + UTP + H(+) = UDP-N-acetyl-alpha-D-glucosamine + diphosphate. It functions in the pathway nucleotide-sugar biosynthesis; UDP-N-acetyl-alpha-D-glucosamine biosynthesis; N-acetyl-alpha-D-glucosamine 1-phosphate from alpha-D-glucosamine 6-phosphate (route II): step 2/2. It participates in nucleotide-sugar biosynthesis; UDP-N-acetyl-alpha-D-glucosamine biosynthesis; UDP-N-acetyl-alpha-D-glucosamine from N-acetyl-alpha-D-glucosamine 1-phosphate: step 1/1. Its pathway is bacterial outer membrane biogenesis; LPS lipid A biosynthesis. Its function is as follows. Catalyzes the last two sequential reactions in the de novo biosynthetic pathway for UDP-N-acetylglucosamine (UDP-GlcNAc). The C-terminal domain catalyzes the transfer of acetyl group from acetyl coenzyme A to glucosamine-1-phosphate (GlcN-1-P) to produce N-acetylglucosamine-1-phosphate (GlcNAc-1-P), which is converted into UDP-GlcNAc by the transfer of uridine 5-monophosphate (from uridine 5-triphosphate), a reaction catalyzed by the N-terminal domain. This is Bifunctional protein GlmU from Streptococcus pyogenes serotype M12 (strain MGAS2096).